Here is a 97-residue protein sequence, read N- to C-terminus: Large ribosomal subunit protein eL21 (97 aa).

This sequence belongs to the eukaryotic ribosomal protein eL21 family.

The protein is Large ribosomal subunit protein eL21 of Methanococcus vannielii (strain ATCC 35089 / DSM 1224 / JCM 13029 / OCM 148 / SB).